We begin with the raw amino-acid sequence, 127 residues long: Egg cell-secreted protein 1.4 (127 aa).

Residues 1 to 25 (MASNTTFLFSTVTLLIILLNTTVSG) form the signal peptide.

This sequence belongs to the plant egg cell-secreted peptide family. Restricted to female reproductive tissues, specifically accumulating in storage vesicles of the unfertilized egg cell.

The protein resides in the cytoplasmic vesicle. It localises to the secreted. Its function is as follows. Involved in the regulation of gamete interactions during the double fertilization and to prevent multiple-pollen tube attraction; mediates the redistribution of the gamete fusogen HAP2/GCS1 to the cell surface after secretion upon sperm arrival. The sequence is that of Egg cell-secreted protein 1.4 (EC1.4) from Arabidopsis thaliana (Mouse-ear cress).